The sequence spans 851 residues: MAKTNISPGMQQYLDIKKDYPDAFLLFRMGDFYELFYEDAVKAAQLLEIGLTSRNKNAENPIPMAGVPHHSAQQYIDVLIELGYKVAVAEQMEDPKQAVGVVKREVVQVITPGTVVDSAKPDSANNFLVAVDFDGCRYGLAYMDVSTGEFCVTDLADFTSVRSEIQNLKAKEVLLGFDLSEEEQTILVKQMNLLLSYEETVYEDKSLIDGQLTTVELTAAGKLLQYVHKTQMRELSHLQALVHYEIKDYLQMSYATKSSLDLVENARTNKKHGSLYWLLDETKTAMGMRLLRSWIDRPLVSKEAILERQEIIQVFLNAFIERTDLSNSLKGVYDIERLSSRVSFGKANPKDLLQLGHTLAQVPYIKAILESFDSPCVDKLVNDIDSLPELEYLIRTAIDPDAPATISEGSIIRNGFDERLDHYRKVMREGTGWIADIEAKERQESGINNLKIDYNKKDGYYFHVTNSNLSLVPEHFFRKATLKNSERYGTAELAKIEGQMLEAREESSSLEYDIFMCIRAQVETYINRLQKLAKTLATVDVLQSLAVVAETNHYIRPQFNDNHVITIQEGRHAVVEKVMGVQEYIPNSISFDQQTSIQLITGPNMSGKSTYMRQLALTVIMAQMGSFVAADHVDLPLFDAIFTRIGAADDLISGQSTFMVEMMEANQAIKRASDNSLILFDELGRGTATYDGMALAQAIIEYIHDRVGAKTIFATHYHELTDLSTKLTSLVNVHVATLEKDGDVTFLHKIAEGPADKSYGIHVAKIAGLPKSLLKRADEVLTRLETQSRSTEIISVPSQVESSNAVRQGQLSLFGDEEKAHEIRQALEAIDVMNMTPLQAMTTLYELKKLL.

ATP is bound at residue 602-609; sequence GPNMSGKS.

This sequence belongs to the DNA mismatch repair MutS family.

This protein is involved in the repair of mismatches in DNA. It is possible that it carries out the mismatch recognition step. This protein has a weak ATPase activity. The chain is DNA mismatch repair protein MutS from Streptococcus pyogenes serotype M49 (strain NZ131).